A 633-amino-acid polypeptide reads, in one-letter code: 1-deoxy-D-xylulose-5-phosphate synthase 2 (633 aa).

Residues histidine 73 and 113-115 (SHA) each bind thiamine diphosphate. Aspartate 145 contributes to the Mg(2+) binding site. Residues 146–147 (GA), asparagine 175, tyrosine 286, and glutamate 367 each bind thiamine diphosphate. Position 175 (asparagine 175) interacts with Mg(2+).

Belongs to the transketolase family. DXPS subfamily. As to quaternary structure, homodimer. Mg(2+) is required as a cofactor. The cofactor is thiamine diphosphate.

The enzyme catalyses D-glyceraldehyde 3-phosphate + pyruvate + H(+) = 1-deoxy-D-xylulose 5-phosphate + CO2. It participates in metabolic intermediate biosynthesis; 1-deoxy-D-xylulose 5-phosphate biosynthesis; 1-deoxy-D-xylulose 5-phosphate from D-glyceraldehyde 3-phosphate and pyruvate: step 1/1. Catalyzes the acyloin condensation reaction between C atoms 2 and 3 of pyruvate and glyceraldehyde 3-phosphate to yield 1-deoxy-D-xylulose-5-phosphate (DXP). The protein is 1-deoxy-D-xylulose-5-phosphate synthase 2 of Kitasatospora griseola (Streptomyces griseolosporeus).